The chain runs to 485 residues: Solute carrier family 35 member F4 (485 aa).

2 stretches are compositionally biased toward polar residues: residues 32–42 (SQKSTTRSSVT) and 50–64 (CPSSHSSISRQLSPL). 2 disordered regions span residues 32–64 (SQKSTTRSSVTRCKPGPNCPSSHSSISRQLSPL) and 78–111 (QSRGSSGVCGRRVERQSRSGDDGTQTRPESSSQE). Basic and acidic residues predominate over residues 88 to 98 (RRVERQSRSGD). Residues 99–111 (DGTQTRPESSSQE) show a composition bias toward polar residues. 10 helical membrane-spanning segments follow: residues 129-149 (IWGLLIILSVSSSWVGTTQIV), 156-176 (FYCPFFMTWFSTNWNIMFFPV), 217-234 (APFSILWTLTNYLYLLAL), 241-261 (DVSALFCCNKAFVFLLSWIVL), 265-285 (FMGVRIVAAIMAITGIVMMAY), 294-314 (IIGVAFAVGSASTSALYKVLF), 329-349 (FVSTLGFFNLIFISFTPIILY), 359-381 (FAALPWGCLCGMAGLWLAFNILV), 383-405 (VGVVLTYPILISIGTVLSVPGNA), and 414-434 (VIFNVVRLAATIIICIGFLLM). Residues 225–285 (LTNYLYLLAL…AITGIVMMAY (61 aa)) form the EamA domain.

The protein belongs to the SLC35F solute transporter family.

The protein resides in the membrane. Its function is as follows. Putative solute transporter. This chain is Solute carrier family 35 member F4 (Slc35f4), found in Mus musculus (Mouse).